The sequence spans 143 residues: Late embryogenesis abundant protein 1 (143 aa).

The span at 1–17 (MSSQQNQNRQGEQQEQG) shows a compositional bias: low complexity. The disordered stretch occupies residues 1–143 (MSSQQNQNRQ…QAGEKVKGRD (143 aa)). 4 consecutive repeat copies span residues 47–57 (KTAEFRDSAGE), 69–79 (KGQEFKERAGE), 80–90 (KAEETKQRAGE), and 91–101 (KMDETKQRAGE). 2 stretches are compositionally biased toward basic and acidic residues: residues 47-60 (KTAE…ETIR) and 69-143 (KGQE…KGRD). Residues 47–101 (KTAEFRDSAGETIRDLTGQAQEKGQEFKERAGEKAEETKQRAGEKMDETKQRAGE) are 4 X 11 AA approximate repeats.

The protein belongs to the LEA type 4 family.

Its function is as follows. May be involved in defense against water stress. This chain is Late embryogenesis abundant protein 1, found in Aphelenchoides avenae (Mycophagous nematode worm).